Reading from the N-terminus, the 333-residue chain is Phosphoribosylformylglycinamidine cyclo-ligase (333 aa).

Belongs to the AIR synthase family.

It localises to the cytoplasm. The catalysed reaction is 2-formamido-N(1)-(5-O-phospho-beta-D-ribosyl)acetamidine + ATP = 5-amino-1-(5-phospho-beta-D-ribosyl)imidazole + ADP + phosphate + H(+). The protein operates within purine metabolism; IMP biosynthesis via de novo pathway; 5-amino-1-(5-phospho-D-ribosyl)imidazole from N(2)-formyl-N(1)-(5-phospho-D-ribosyl)glycinamide: step 2/2. This chain is Phosphoribosylformylglycinamidine cyclo-ligase, found in Methanococcoides burtonii (strain DSM 6242 / NBRC 107633 / OCM 468 / ACE-M).